Reading from the N-terminus, the 611-residue chain is DNA mismatch repair protein MutL (611 aa).

It belongs to the DNA mismatch repair MutL/HexB family.

In terms of biological role, this protein is involved in the repair of mismatches in DNA. It is required for dam-dependent methyl-directed DNA mismatch repair. May act as a 'molecular matchmaker', a protein that promotes the formation of a stable complex between two or more DNA-binding proteins in an ATP-dependent manner without itself being part of a final effector complex. The sequence is that of DNA mismatch repair protein MutL from Borreliella afzelii (strain PKo) (Borrelia afzelii).